Reading from the N-terminus, the 201-residue chain is Large ribosomal subunit protein uL4 (201 aa).

The disordered stretch occupies residues 45–66; that stretch reads AQKSRAEVVGSNKKPWRQKGTG.

Belongs to the universal ribosomal protein uL4 family. In terms of assembly, part of the 50S ribosomal subunit.

In terms of biological role, one of the primary rRNA binding proteins, this protein initially binds near the 5'-end of the 23S rRNA. It is important during the early stages of 50S assembly. It makes multiple contacts with different domains of the 23S rRNA in the assembled 50S subunit and ribosome. Its function is as follows. Forms part of the polypeptide exit tunnel. In Baumannia cicadellinicola subsp. Homalodisca coagulata, this protein is Large ribosomal subunit protein uL4.